Reading from the N-terminus, the 186-residue chain is Peptidoglycan-recognition protein SD (186 aa).

A signal peptide spans 1–18; that stretch reads MTWIGLLIVGLTAIAVQG. Positions 47-169 constitute an N-acetylmuramoyl-L-alanine amidase domain; it reads AVIAHTAGGA…RQVSATMSPG (123 aa). A disulfide bridge links cysteine 57 with cysteine 63. An N-linked (GlcNAc...) asparagine glycan is attached at asparagine 181.

Belongs to the N-acetylmuramoyl-L-alanine amidase 2 family.

The protein resides in the secreted. In terms of biological role, peptidoglycan-recognition protein that plays a key role in innate immunity by binding to peptidoglycans (PGN) of Gram-positive bacteria and activating the Toll pathway. Has no activity against on Gram-negative bacteria and fungi. Shows some partial redundancy with PRPGP-SA in Gram-positive bacteria recognition. May act by activating the proteolytic cleavage of Spatzle and the subsequent activation of Toll pathway. Recognizes S.aureus PGN. This is Peptidoglycan-recognition protein SD (PGRP-SD) from Drosophila simulans (Fruit fly).